The primary structure comprises 62 residues: MNVKELRNQDVSTLNETLIKLLKKHFELRMQHKSAQLDDASKLGKTKRSIAQVKTIIRQKQV.

The protein belongs to the universal ribosomal protein uL29 family.

This is Large ribosomal subunit protein uL29 from Ruthia magnifica subsp. Calyptogena magnifica.